We begin with the raw amino-acid sequence, 476 residues long: Serine/threonine-protein kinase sax-1 (476 aa).

In terms of domain architecture, Protein kinase spans 87-381; the sequence is FESLKVIGRG…LDEIKQCPFV (295 aa). Residues 93-101 and Lys116 each bind ATP; that span reads IGRGAFGEV. The active-site Proton acceptor is the Asp210. Residues 382-452 form the AGC-kinase C-terminal domain; it reads KRIDWNHIRE…KRFDGLTQKM (71 aa).

This sequence belongs to the protein kinase superfamily. AGC Ser/Thr protein kinase family. Mg(2+) is required as a cofactor. As to expression, widely expressed in embryonic and larval neurons that contribute axons to the nerve ring and in hypodermal cells, including lateral seam cells. Also displays a punctate localization in muscle.

It is found in the cytoplasm. Its subcellular location is the nucleus. The catalysed reaction is L-seryl-[protein] + ATP = O-phospho-L-seryl-[protein] + ADP + H(+). The enzyme catalyses L-threonyl-[protein] + ATP = O-phospho-L-threonyl-[protein] + ADP + H(+). Its function is as follows. Acts with sax-2 to restrict the growth of both primary and secondary neurites. Regulates mechanosensory tiling by controlling the termination point of sensory dendrites. In Caenorhabditis elegans, this protein is Serine/threonine-protein kinase sax-1.